Reading from the N-terminus, the 267-residue chain is 3-methyl-2-oxobutanoate hydroxymethyltransferase (267 aa).

The Mg(2+) site is built by D45 and D84. 3-methyl-2-oxobutanoate-binding positions include 45-46 (DS), D84, and K113. E115 serves as a coordination point for Mg(2+). The active-site Proton acceptor is E182.

It belongs to the PanB family. In terms of assembly, homodecamer; pentamer of dimers. Requires Mg(2+) as cofactor.

It is found in the cytoplasm. The enzyme catalyses 3-methyl-2-oxobutanoate + (6R)-5,10-methylene-5,6,7,8-tetrahydrofolate + H2O = 2-dehydropantoate + (6S)-5,6,7,8-tetrahydrofolate. It participates in cofactor biosynthesis; coenzyme A biosynthesis. Functionally, catalyzes the reversible reaction in which hydroxymethyl group from 5,10-methylenetetrahydrofolate is transferred onto alpha-ketoisovalerate to form ketopantoate. This Saccharolobus solfataricus (strain ATCC 35092 / DSM 1617 / JCM 11322 / P2) (Sulfolobus solfataricus) protein is 3-methyl-2-oxobutanoate hydroxymethyltransferase.